Reading from the N-terminus, the 556-residue chain is MVHPLPVFKRYTGNTHQKKAIFGQCRGLPCVAPLLTTVEEAPRGISARVWGHFPKWLNGSLLRIGPGKFEFGKDKYNHWFDGMALLHQFRMAKGTVTYRSKFLQSDTYKANSAKNRIVMSEFGTLATPDPCKNVFERFMSRFELPGKAAAMTDNTNVNYVRYKGDYYLCTETNFMNKVDIETLEKTEKVDWSKFIAVNGATAHPHYDPDGTAYNMGNSFGPFGFSYKVIRVPPEKVDLEETTHGAQVICSIAPTEKGKPSYYHSFGMTRNYIIFIEQPLKMNLWKIATSKIRGKAFSDGISWEPQCNTRFHVVDKHTGQLLPGRYYSKPFVAFHHINAFEDQGCVIIDLCCQDNGRILEVYQLQNLRKAGEELDQVYNSAGRSFPRRFVLPLNVSLNAPEGDNLSPLSYTSASAVKQADGTIWCSHENLHQEDLEKEGGIEFPQIYYGQFSGKKYRFFYGCGFRHLVGDSLIKVDVVNKTLKVWREDGFYPSEPVFVPVPGTNEEDGGVILSVVITPNQNESNFLLVLDAKNFEELGRAEVPVQMPYGFHGTFIPI.

Residues His203, His263, His334, and His550 each contribute to the Fe cation site.

It belongs to the carotenoid oxygenase family. Fe(2+) is required as a cofactor.

It localises to the mitochondrion. It carries out the reaction all-trans-beta-carotene + O2 = beta-ionone + all-trans-10'-apo-beta-carotenal. It catalyses the reaction 5-cis-lycopene + O2 = 5-cis-10'-apo-lycopenal + (3E,5E)-6,10-dimethylundeca-3,5,9-trien-2-one. The enzyme catalyses 13-cis-lycopene + O2 = 13-cis-10'-apo-lycopenal + (3E,5E)-6,10-dimethylundeca-3,5,9-trien-2-one. The catalysed reaction is lutein + O2 = (3R,6R)-hydroxy-alpha-ionone + (3R)-3-hydroxy-10'-apo-beta-carotenal. It carries out the reaction lutein + O2 = (3R,6R)-3-hydroxy-10'-apo-alpha-carotenal + (3R)-hydroxy-beta-ionone. It catalyses the reaction all-trans-zeaxanthin + 2 O2 = 4,9-dimethyldodeca-2,4,6,8,10-pentaenedial + 2 (3R)-hydroxy-beta-ionone. The enzyme catalyses all-trans-zeaxanthin + O2 = (3R)-3-hydroxy-10'-apo-beta-carotenal + (3R)-hydroxy-beta-ionone. The catalysed reaction is beta-cryptoxanthin + O2 = all-trans-10'-apo-beta-carotenal + (3R)-hydroxy-beta-ionone. It carries out the reaction all-trans-10'-apo-beta-carotenal + O2 = beta-ionone + 4,9-dimethyldodeca-2,4,6,8,10-pentaenedial. It catalyses the reaction (3R)-3-hydroxy-10'-apo-beta-carotenal + O2 = 4,9-dimethyldodeca-2,4,6,8,10-pentaenedial + (3R)-hydroxy-beta-ionone. The enzyme catalyses (3R,6R)-3-hydroxy-10'-apo-alpha-carotenal + O2 = (3R,6R)-hydroxy-alpha-ionone + 4,9-dimethyldodeca-2,4,6,8,10-pentaenedial. Its function is as follows. Broad specificity mitochondrial dioxygenase that mediates the asymmetric oxidative cleavage of carotenoids. Cleaves carotenes (pure hydrocarbon carotenoids) such as all-trans-beta-carotene and lycopene as well as xanthophylls (oxygenated carotenoids) such as zeaxanthin, lutein and beta-cryptoxanthin at both the 9,10 and the 9',10' carbon-carbon double bond. Through its function in carotenoids metabolism regulates oxidative stress and the production of important signaling molecules. This Macaca fascicularis (Crab-eating macaque) protein is Carotenoid-cleaving dioxygenase, mitochondrial.